We begin with the raw amino-acid sequence, 371 residues long: MRLIIAGGGTGGHLFPGIAIADEFLARSPENEVLFVGTERGIEARLLPKLGYKLALISASGMKGMGTIKKIMSAGRLLYGYSQSRKILKEFRPDLVLGVGGYASAPIVLAARGMGVRRFIHEQNAFPGLTNKVLGRIVDGVFISMPEAESFFPKEITQMTGNPIRKEILWGFQERVRSVGDTFSILVFGGSAGAQRVNSALLEALPHLEGVKGKLRITHQTGEKDAARVREGYQAQGVQAQVLSFIDDMSAAYGAADLVVCRAGATTIAEVTACGKGCIFIPFPYAADDHQRKNAESLVHKNAGVMILEEDLTGERLAAKILDLMEHPAELAEMEKNARALAQLDAAQAIVAAMVTKNQERDKDKENQRAR.

Residues 10 to 12 (TGG), N124, R165, S191, I246, and Q291 contribute to the UDP-N-acetyl-alpha-D-glucosamine site.

This sequence belongs to the glycosyltransferase 28 family. MurG subfamily.

Its subcellular location is the cell inner membrane. The catalysed reaction is di-trans,octa-cis-undecaprenyl diphospho-N-acetyl-alpha-D-muramoyl-L-alanyl-D-glutamyl-meso-2,6-diaminopimeloyl-D-alanyl-D-alanine + UDP-N-acetyl-alpha-D-glucosamine = di-trans,octa-cis-undecaprenyl diphospho-[N-acetyl-alpha-D-glucosaminyl-(1-&gt;4)]-N-acetyl-alpha-D-muramoyl-L-alanyl-D-glutamyl-meso-2,6-diaminopimeloyl-D-alanyl-D-alanine + UDP + H(+). It functions in the pathway cell wall biogenesis; peptidoglycan biosynthesis. Cell wall formation. Catalyzes the transfer of a GlcNAc subunit on undecaprenyl-pyrophosphoryl-MurNAc-pentapeptide (lipid intermediate I) to form undecaprenyl-pyrophosphoryl-MurNAc-(pentapeptide)GlcNAc (lipid intermediate II). The sequence is that of UDP-N-acetylglucosamine--N-acetylmuramyl-(pentapeptide) pyrophosphoryl-undecaprenol N-acetylglucosamine transferase from Geobacter sp. (strain M21).